Here is a 188-residue protein sequence, read N- to C-terminus: Elongation factor P (188 aa).

Position 34 is an N6-(3,6-diaminohexanoyl)-5-hydroxylysine (Lys-34).

The protein belongs to the elongation factor P family. Post-translationally, may be beta-lysylated on the epsilon-amino group of Lys-34 by the combined action of EpmA and EpmB, and then hydroxylated on the C5 position of the same residue by EpmC (if this protein is present). Lysylation is critical for the stimulatory effect of EF-P on peptide-bond formation. The lysylation moiety may extend toward the peptidyltransferase center and stabilize the terminal 3-CCA end of the tRNA. Hydroxylation of the C5 position on Lys-34 may allow additional potential stabilizing hydrogen-bond interactions with the P-tRNA.

It localises to the cytoplasm. Its pathway is protein biosynthesis; polypeptide chain elongation. In terms of biological role, involved in peptide bond synthesis. Alleviates ribosome stalling that occurs when 3 or more consecutive Pro residues or the sequence PPG is present in a protein, possibly by augmenting the peptidyl transferase activity of the ribosome. Modification of Lys-34 is required for alleviation. This is Elongation factor P from Histophilus somni (strain 129Pt) (Haemophilus somnus).